The sequence spans 554 residues: Valerianol synthase TPS1G (554 aa).

Asp307 and Asp311 together coordinate Mg(2+). The DDXXD motif motif lies at 326–330; that stretch reads VQRWD. Mg(2+)-binding residues include Asp452, Ser456, and Glu460.

This sequence belongs to the terpene synthase family. Mg(2+) serves as cofactor.

It carries out the reaction (2E,6E)-farnesyl diphosphate + H2O = valerianol + diphosphate. It functions in the pathway secondary metabolite biosynthesis; terpenoid biosynthesis. Its function is as follows. Terpene synthase that catalyzes the biosynthesis of the terpene valerianol, which is a volatile compound of floral scent. The chain is Valerianol synthase TPS1G from Camellia hiemalis (Camellia).